We begin with the raw amino-acid sequence, 844 residues long: NADPH-Fe(3+) oxidoreductase subunit alpha (844 aa).

Residues 1 to 78 (MVSLTIDGKD…GIKVTTQSEK (78 aa)) enclose the 2Fe-2S ferredoxin-type domain. [2Fe-2S] cluster contacts are provided by C34, C45, C48, and C62. The 4Fe-4S His(Cys)3-ligated-type domain occupies 78–117 (KLSRIRQKIMELMLVNHPLDCPVCDAGGECDLQNACYGLG). The [4Fe-4S] cluster site is built by H94, C98, C101, C107, C146, C149, C152, C186, C189, C192, C196, C222, C225, C229, and C256. 2 consecutive 4Fe-4S ferredoxin-type domains span residues 137–168 (PLIESDPNRCILCEKCVKVDHEIVGCNAIRVV) and 177–206 (DTVDGNPLNCEFCGNCVAACPTGTLISKPF). A 4Fe-4S Mo/W bis-MGD-type domain is found at 215–270 (FTTTPSVCPFCATGCQIEYHSRNGRVERVTSDDSTYNSGNLCINGRFGYSYINSPD).

Heterotetramer with 2 beta subunits. It depends on [4Fe-4S] cluster as a cofactor.

The protein resides in the cell inner membrane. With respect to regulation, not regulated by FAD or FMN. Its function is as follows. The SfrAB enzymatic complex is probably involved in acetate metabolism and does not participate directly in the reduction of Fe(3+) chelates. May serve as a major route for NADP regeneration. The chain is NADPH-Fe(3+) oxidoreductase subunit alpha (sfrA) from Geobacter sulfurreducens (strain DL-1 / KN400).